A 201-amino-acid chain; its full sequence is 3-isopropylmalate dehydratase small subunit (201 aa).

The protein belongs to the LeuD family. LeuD type 1 subfamily. As to quaternary structure, heterodimer of LeuC and LeuD.

It carries out the reaction (2R,3S)-3-isopropylmalate = (2S)-2-isopropylmalate. The protein operates within amino-acid biosynthesis; L-leucine biosynthesis; L-leucine from 3-methyl-2-oxobutanoate: step 2/4. In terms of biological role, catalyzes the isomerization between 2-isopropylmalate and 3-isopropylmalate, via the formation of 2-isopropylmaleate. The chain is 3-isopropylmalate dehydratase small subunit from Nitrobacter winogradskyi (strain ATCC 25391 / DSM 10237 / CIP 104748 / NCIMB 11846 / Nb-255).